A 376-amino-acid chain; its full sequence is Palmitoyl-[acyl-carrier-protein] 4-desaturase 2, chloroplastic (376 aa).

A chloroplast-targeting transit peptide spans 1–33 (MELHLALRASPLPAADPGRRPPPPRGNFATNCT). Glu-114, Glu-149, His-152, Glu-202, Glu-235, and His-238 together coordinate Fe cation.

The protein belongs to the fatty acid desaturase type 2 family. As to quaternary structure, homodimer. It depends on Fe(2+) as a cofactor. As to expression, preferentially expressed in the flower labellum.

Its subcellular location is the plastid. It localises to the chloroplast stroma. It catalyses the reaction hexadecanoyl-[ACP] + 2 reduced [2Fe-2S]-[ferredoxin] + O2 + 2 H(+) = (4Z)-hexadecenoyl-[ACP] + 2 oxidized [2Fe-2S]-[ferredoxin] + 2 H2O. The catalysed reaction is octadecanoyl-[ACP] + 2 reduced [2Fe-2S]-[ferredoxin] + O2 + 2 H(+) = (9Z)-octadecenoyl-[ACP] + 2 oxidized [2Fe-2S]-[ferredoxin] + 2 H2O. Its pathway is lipid metabolism; fatty acid metabolism. Functionally, converts stearoyl-ACP to oleoyl-ACP by introduction of a cis double bond between carbons 9 and 10 of the acyl chain. Converts palmitoyl-ACP to (4Z)-hexadec-4-enoyl-ACP by introduction of a cis double bond between carbons 4 and 5 of the acyl chain. Catalyzes the desaturation of saturated fatty acid 18:0 and 16:0 to generate 18:1 (delta-9) and 16:1 (delta-4) intermediates, expected to give rise to 9-alkenes and 12-alkenes, respectively. This chain is Palmitoyl-[acyl-carrier-protein] 4-desaturase 2, chloroplastic (SAD2), found in Ophrys sphegodes (Early spider orchid).